A 388-amino-acid chain; its full sequence is Leucine aminopeptidase 1 (388 aa).

The signal sequence occupies residues 1 to 19 (MKVLTAIALSAIAFTGAVA). Residues 20–88 (AVITQEAFLN…YPTLHSASYV (69 aa)) constitute a propeptide that is removed on maturation. Residues asparagine 106 and asparagine 180 are each glycosylated (N-linked (GlcNAc...) asparagine). Positions 188 and 207 each coordinate Zn(2+). The N-linked (GlcNAc...) asparagine glycan is linked to asparagine 232. Positions 246 and 273 each coordinate Zn(2+). Cysteines 322 and 326 form a disulfide. Histidine 355 contributes to the Zn(2+) binding site.

This sequence belongs to the peptidase M28 family. M28E subfamily. Monomer. Requires Zn(2+) as cofactor.

The protein resides in the secreted. Functionally, extracellular aminopeptidase that allows assimilation of proteinaceous substrates and which contributes to pathogenicity. The protein is Leucine aminopeptidase 1 (lap1) of Aspergillus fumigatus (strain CBS 144.89 / FGSC A1163 / CEA10) (Neosartorya fumigata).